The following is a 158-amino-acid chain: Ribosome-binding factor A (158 aa).

The disordered stretch occupies residues 130-158 (TAQYAGDADPYKHDDEAEAEGDEFESDEE). The segment covering 145-158 (EAEAEGDEFESDEE) has biased composition (acidic residues).

The protein belongs to the RbfA family. As to quaternary structure, monomer. Binds 30S ribosomal subunits, but not 50S ribosomal subunits or 70S ribosomes.

Its subcellular location is the cytoplasm. Functionally, one of several proteins that assist in the late maturation steps of the functional core of the 30S ribosomal subunit. Associates with free 30S ribosomal subunits (but not with 30S subunits that are part of 70S ribosomes or polysomes). Required for efficient processing of 16S rRNA. May interact with the 5'-terminal helix region of 16S rRNA. This Bifidobacterium longum subsp. infantis (strain ATCC 15697 / DSM 20088 / JCM 1222 / NCTC 11817 / S12) protein is Ribosome-binding factor A.